A 765-amino-acid chain; its full sequence is LPS-assembly protein LptD (765 aa).

The signal sequence occupies residues 1–18; that stretch reads MQIRYFLALSLLPQLVLA.

The protein belongs to the LptD family. As to quaternary structure, component of the lipopolysaccharide transport and assembly complex. Interacts with LptE and LptA.

The protein resides in the cell outer membrane. Together with LptE, is involved in the assembly of lipopolysaccharide (LPS) at the surface of the outer membrane. The chain is LPS-assembly protein LptD from Shewanella sp. (strain MR-4).